A 421-amino-acid polypeptide reads, in one-letter code: UDP-N-acetylglucosamine 1-carboxyvinyltransferase (421 aa).

22 to 23 contributes to the phosphoenolpyruvate binding site; that stretch reads KN. R93 contributes to the UDP-N-acetyl-alpha-D-glucosamine binding site. C117 (proton donor) is an active-site residue. Position 117 is a 2-(S-cysteinyl)pyruvic acid O-phosphothioketal (C117). Residues 122-126, D308, and I330 each bind UDP-N-acetyl-alpha-D-glucosamine; that span reads RPVDL.

It belongs to the EPSP synthase family. MurA subfamily.

Its subcellular location is the cytoplasm. It catalyses the reaction phosphoenolpyruvate + UDP-N-acetyl-alpha-D-glucosamine = UDP-N-acetyl-3-O-(1-carboxyvinyl)-alpha-D-glucosamine + phosphate. It participates in cell wall biogenesis; peptidoglycan biosynthesis. Functionally, cell wall formation. Adds enolpyruvyl to UDP-N-acetylglucosamine. This chain is UDP-N-acetylglucosamine 1-carboxyvinyltransferase, found in Pseudomonas fluorescens (strain Pf0-1).